We begin with the raw amino-acid sequence, 629 residues long: Pumilio homolog 3 (629 aa).

2 stretches are compositionally biased toward basic residues: residues 1–10 (MEGKPRKKSF) and 18–37 (PSFK…RPFK). Residues 1 to 92 (MEGKPRKKSF…EGDERKKPKW (92 aa)) form a disordered region. Positions 62 to 92 (KPTDGKFAKKRKFPGDRIKQEEGDERKKPKW) are enriched in basic and acidic residues. The short motif at 88–100 (KKPKWDEFKQKKK) is the Nuclear localization signal element. The region spanning 120–473 (RAKQVWEMVR…ELLEAASPSL (354 aa)) is the PUM-HD domain. Pumilio repeat units lie at residues 160-195 (HDST…LSKS), 196-231 (KYAR…MLRH), 232-260 (SEAS…ELYG), 272-308 (PTLE…VIKH), 309-344 (SLVH…MAHT), 345-380 (HDGA…FAMG), 381-418 (EYAH…IISN), 419-487 (KHGK…MVMD), 488-534 (KSCC…MAEH), 535-579 (PAGH…WASV), and 580-618 (NRGA…LQNS).

As to expression, in adult, expressed at high levels in eye and ovary and at lower levels in brain, testis and head kidney. In the adult ovary, prominently expressed in early immature follicles.

Its subcellular location is the nucleus. The protein resides in the nucleolus. It localises to the nucleoplasm. The protein localises to the chromosome. Functionally, inhibits the poly(ADP-ribosyl)ation activity of PARP1 and the degradation of PARP1 by CASP3 following genotoxic stress. Binds to double-stranded RNA or DNA without sequence specificity. Involved in development of the eye and of primordial germ cells. This chain is Pumilio homolog 3 (pum3), found in Danio rerio (Zebrafish).